The chain runs to 395 residues: MVKLPSASRIRSLATVPSTATRAFATVNPTPPAAQPTKSKPRFEKLDDGLTFDDFLSGDVPPENERVVLGNTKQPRLPSFLKHPIPTGASYSGIKKELRGLGLHTVCEEAKCPNIGECWGGGKGNATATIMLMGDQCTRGCRFCSVKTSRAPPPLDVHEPENTAEAISRWGLGYIVLTSVDRDDLVDGGAAHIASTISKIKQKAPNILVEALTPDFATKGVNVIHTVASSGLDVFAHNVETVERCTPFVRDRRAGFSQSLKVLEEAKKGAKAAGREILTKSSIMLGVGEMEEEIHETLRRLRASDVDVVTFGQYMRPTKRHMKVDRYVEPEEFAKWKNVAEGMGFLYVASGPLVRSSYKAGEFFIENVLKKRRAAAAEHAASQLSTQPPEIAAKV.

A mitochondrion-targeting transit peptide spans 1–24 (MVKLPSASRIRSLATVPSTATRAF). [4Fe-4S] cluster is bound by residues cysteine 107, cysteine 112, cysteine 118, cysteine 137, cysteine 141, cysteine 144, and serine 357. A Radical SAM core domain is found at 122 to 346 (GKGNATATIM…KNVAEGMGFL (225 aa)).

This sequence belongs to the radical SAM superfamily. Lipoyl synthase family. The cofactor is [4Fe-4S] cluster.

Its subcellular location is the mitochondrion. The catalysed reaction is [[Fe-S] cluster scaffold protein carrying a second [4Fe-4S](2+) cluster] + N(6)-octanoyl-L-lysyl-[protein] + 2 oxidized [2Fe-2S]-[ferredoxin] + 2 S-adenosyl-L-methionine + 4 H(+) = [[Fe-S] cluster scaffold protein] + N(6)-[(R)-dihydrolipoyl]-L-lysyl-[protein] + 4 Fe(3+) + 2 hydrogen sulfide + 2 5'-deoxyadenosine + 2 L-methionine + 2 reduced [2Fe-2S]-[ferredoxin]. It participates in protein modification; protein lipoylation via endogenous pathway; protein N(6)-(lipoyl)lysine from octanoyl-[acyl-carrier-protein]: step 2/2. Its function is as follows. Catalyzes the radical-mediated insertion of two sulfur atoms into the C-6 and C-8 positions of the octanoyl moiety bound to the lipoyl domains of lipoate-dependent enzymes, thereby converting the octanoylated domains into lipoylated derivatives. The polypeptide is Lipoyl synthase, mitochondrial (Cryptococcus neoformans var. neoformans serotype D (strain B-3501A) (Filobasidiella neoformans)).